The sequence spans 201 residues: Adenylyl-sulfate kinase (201 aa).

Gly35–Ser42 is an ATP binding site. Catalysis depends on Ser109, which acts as the Phosphoserine intermediate.

This sequence belongs to the APS kinase family.

It catalyses the reaction adenosine 5'-phosphosulfate + ATP = 3'-phosphoadenylyl sulfate + ADP + H(+). The protein operates within sulfur metabolism; hydrogen sulfide biosynthesis; sulfite from sulfate: step 2/3. Its function is as follows. Catalyzes the synthesis of activated sulfate. This is Adenylyl-sulfate kinase from Salmonella gallinarum (strain 287/91 / NCTC 13346).